We begin with the raw amino-acid sequence, 735 residues long: Catalase-peroxidase (735 aa).

Residues 1 to 25 (MSDSKCPVTGKSSRQVAGGGTSNRD) are disordered. The tryptophyl-tyrosyl-methioninium (Trp-Tyr) (with M-249) cross-link spans 95–223 (WHSAGTYRMG…LAAVQMGLIY (129 aa)). His-96 acts as the Proton acceptor in catalysis. Positions 223 to 249 (YINPEGPDGNPDPVASGRDVRETFARM) form a cross-link, tryptophyl-tyrosyl-methioninium (Tyr-Met) (with W-95). His-264 is a heme b binding site.

The protein belongs to the peroxidase family. Peroxidase/catalase subfamily. In terms of assembly, homodimer or homotetramer. Heme b serves as cofactor. Formation of the three residue Trp-Tyr-Met cross-link is important for the catalase, but not the peroxidase activity of the enzyme.

The enzyme catalyses H2O2 + AH2 = A + 2 H2O. It catalyses the reaction 2 H2O2 = O2 + 2 H2O. Its function is as follows. Bifunctional enzyme with both catalase and broad-spectrum peroxidase activity. This Trichlorobacter lovleyi (strain ATCC BAA-1151 / DSM 17278 / SZ) (Geobacter lovleyi) protein is Catalase-peroxidase.